A 297-amino-acid polypeptide reads, in one-letter code: MKRPDYRTLQALDAVIRERGFERAAQKLCITQSAVSQRIKQLENMFGQPLLVRTVPPRPTEQGQKLLALLRQVELLEEEWLGDEQTGSTPLLLSLAVNADSLATWLLPALAPVLADSPIRLNLQVEDETRTQERLRRGEVVGAVSIQHQALPSCLVDKLGALDYLFVASKPFAERYFPNGVTRSSLLKAPAVAFDHLDDMHQAFLQQNFDLPPGSVPCHIVNSSEAFVQLARQGTACCMIPHLQIEKELESGELINLTPGLLQRRMLYWHRFAPESRMMRKVTDALLEYGHKVLRQD.

Residues 4 to 60 enclose the HTH lysR-type domain; it reads PDYRTLQALDAVIRERGFERAAQKLCITQSAVSQRIKQLENMFGQPLLVRTVPPRPT. Residues 21-40 constitute a DNA-binding region (H-T-H motif); the sequence is FERAAQKLCITQSAVSQRIK.

This sequence belongs to the LysR transcriptional regulatory family. As to quaternary structure, homodimer.

Controls the transcription of genes involved in arginine and lysine metabolism. This Salmonella typhi protein is HTH-type transcriptional regulator ArgP.